The primary structure comprises 330 residues: Methionyl-tRNA formyltransferase (330 aa).

Residue 112–115 participates in (6S)-5,6,7,8-tetrahydrofolate binding; it reads SLLP.

It belongs to the Fmt family.

It catalyses the reaction L-methionyl-tRNA(fMet) + (6R)-10-formyltetrahydrofolate = N-formyl-L-methionyl-tRNA(fMet) + (6S)-5,6,7,8-tetrahydrofolate + H(+). In terms of biological role, attaches a formyl group to the free amino group of methionyl-tRNA(fMet). The formyl group appears to play a dual role in the initiator identity of N-formylmethionyl-tRNA by promoting its recognition by IF2 and preventing the misappropriation of this tRNA by the elongation apparatus. In Synechocystis sp. (strain ATCC 27184 / PCC 6803 / Kazusa), this protein is Methionyl-tRNA formyltransferase.